The following is a 244-amino-acid chain: Ribosome maturation factor RimM (244 aa).

A disordered region spans residues 1–58 (MSERDSGSSGPVKAKAAAPRAKTSGQAPFGAFVRKPVEKTEGKAKANAANAGSGATEM). The segment covering 13–22 (KAKAAAPRAK) has biased composition (low complexity). The segment covering 35–44 (KPVEKTEGKA) has biased composition (basic and acidic residues). Positions 45 to 57 (KANAANAGSGATE) are enriched in low complexity. The PRC barrel domain maps to 163–244 (ADEFYWVDLL…QITVDWEADY (82 aa)).

The protein belongs to the RimM family. As to quaternary structure, binds ribosomal protein uS19.

It localises to the cytoplasm. Functionally, an accessory protein needed during the final step in the assembly of 30S ribosomal subunit, possibly for assembly of the head region. Essential for efficient processing of 16S rRNA. May be needed both before and after RbfA during the maturation of 16S rRNA. It has affinity for free ribosomal 30S subunits but not for 70S ribosomes. This Paraburkholderia xenovorans (strain LB400) protein is Ribosome maturation factor RimM.